The primary structure comprises 385 residues: Probable threonine protease PRSS50 (385 aa).

The first 39 residues, 1–39 (MGRWCQTVARGQRPRTSAPSRAGALLLLLLLLRSAGCWG), serve as a signal peptide directing secretion. The Peptidase S1 domain occupies 93 to 358 (VSEGKVDPYR…YQHWIWDCLN (266 aa)). The N-linked (GlcNAc...) asparagine glycan is linked to Asn-133. A disulfide bond links Cys-138 and Cys-154. Residues His-153 and Asp-206 each act as charge relay system in the active site. 3 cysteine pairs are disulfide-bonded: Cys-240-Cys-316, Cys-273-Cys-296, and Cys-306-Cys-334. N-linked (GlcNAc...) asparagine glycosylation occurs at Asn-279. Thr-310 serves as the catalytic Charge relay system.

This sequence belongs to the peptidase S1 family. In terms of tissue distribution, testis specific. Differentially expressed in some breast cancer tissues.

The protein resides in the endoplasmic reticulum. In terms of biological role, may be involved in proteolysis through its threonine endopeptidase activity. This Homo sapiens (Human) protein is Probable threonine protease PRSS50 (PRSS50).